The primary structure comprises 137 residues: Large ribosomal subunit protein uL16 (137 aa).

It belongs to the universal ribosomal protein uL16 family. Part of the 50S ribosomal subunit.

Its function is as follows. Binds 23S rRNA and is also seen to make contacts with the A and possibly P site tRNAs. In Nitratidesulfovibrio vulgaris (strain ATCC 29579 / DSM 644 / CCUG 34227 / NCIMB 8303 / VKM B-1760 / Hildenborough) (Desulfovibrio vulgaris), this protein is Large ribosomal subunit protein uL16.